The following is a 406-amino-acid chain: 2,3-bisphosphoglycerate-independent phosphoglycerate mutase (406 aa).

It belongs to the BPG-independent phosphoglycerate mutase family. A-PGAM subfamily.

The catalysed reaction is (2R)-2-phosphoglycerate = (2R)-3-phosphoglycerate. It functions in the pathway carbohydrate degradation; glycolysis; pyruvate from D-glyceraldehyde 3-phosphate: step 3/5. Catalyzes the interconversion of 2-phosphoglycerate and 3-phosphoglycerate. The protein is 2,3-bisphosphoglycerate-independent phosphoglycerate mutase of Methanococcus vannielii (strain ATCC 35089 / DSM 1224 / JCM 13029 / OCM 148 / SB).